We begin with the raw amino-acid sequence, 304 residues long: uncharacterized protein (304 aa).

The protein belongs to the histone deacetylase family.

In terms of biological role, putative deacetylase. This is an uncharacterized protein from Synechocystis sp. (strain ATCC 27184 / PCC 6803 / Kazusa).